The primary structure comprises 209 residues: Uracil phosphoribosyltransferase (209 aa).

5-phospho-alpha-D-ribose 1-diphosphate contacts are provided by residues R79, R104, and 131–139 (DPMLATGGS). Uracil is bound by residues I194 and 199-201 (GDA). Position 200 (D200) interacts with 5-phospho-alpha-D-ribose 1-diphosphate.

This sequence belongs to the UPRTase family. It depends on Mg(2+) as a cofactor.

The catalysed reaction is UMP + diphosphate = 5-phospho-alpha-D-ribose 1-diphosphate + uracil. It participates in pyrimidine metabolism; UMP biosynthesis via salvage pathway; UMP from uracil: step 1/1. Its activity is regulated as follows. Allosterically activated by GTP. Its function is as follows. Catalyzes the conversion of uracil and 5-phospho-alpha-D-ribose 1-diphosphate (PRPP) to UMP and diphosphate. This is Uracil phosphoribosyltransferase from Geobacter sp. (strain M21).